The following is a 349-amino-acid chain: Dihydroorotate dehydrogenase (quinone) (349 aa).

Residues 67 to 71 (AGLDK) and T91 each bind FMN. K71 provides a ligand contact to substrate. 116–120 (NRLGF) contacts substrate. 2 residues coordinate FMN: N147 and N180. N180 serves as a coordination point for substrate. The active-site Nucleophile is the S183. N185 contributes to the substrate binding site. 2 residues coordinate FMN: K225 and T253. 254–255 (NT) serves as a coordination point for substrate. FMN is bound by residues G276, G305, and 326–327 (YT).

The protein belongs to the dihydroorotate dehydrogenase family. Type 2 subfamily. In terms of assembly, monomer. Requires FMN as cofactor.

The protein resides in the cell membrane. The enzyme catalyses (S)-dihydroorotate + a quinone = orotate + a quinol. It participates in pyrimidine metabolism; UMP biosynthesis via de novo pathway; orotate from (S)-dihydroorotate (quinone route): step 1/1. Its function is as follows. Catalyzes the conversion of dihydroorotate to orotate with quinone as electron acceptor. This chain is Dihydroorotate dehydrogenase (quinone), found in Bordetella pertussis (strain Tohama I / ATCC BAA-589 / NCTC 13251).